A 317-amino-acid chain; its full sequence is tRNA(Met) cytidine acetate ligase (317 aa).

Residues 6–19, Gly-100, Asn-157, and Arg-182 contribute to the ATP site; that span reads IAEYNPFHNGHIYQ.

The protein belongs to the TmcAL family.

The protein localises to the cytoplasm. It catalyses the reaction cytidine(34) in elongator tRNA(Met) + acetate + ATP = N(4)-acetylcytidine(34) in elongator tRNA(Met) + AMP + diphosphate. Its function is as follows. Catalyzes the formation of N(4)-acetylcytidine (ac(4)C) at the wobble position of elongator tRNA(Met), using acetate and ATP as substrates. First activates an acetate ion to form acetyladenylate (Ac-AMP) and then transfers the acetyl group to tRNA to form ac(4)C34. This chain is tRNA(Met) cytidine acetate ligase, found in Mesomycoplasma hyopneumoniae (strain 232) (Mycoplasma hyopneumoniae).